The following is a 408-amino-acid chain: Probable medium-chain specific acyl-CoA dehydrogenase 2, mitochondrial (408 aa).

Residues 1–5 (MLSRL) constitute a mitochondrion transit peptide. FAD-binding positions include 143-152 (YCVTEPGAGS) and 176-178 (WIT). Serine 152 provides a ligand contact to substrate. 263-266 (DMTR) lines the substrate pocket. FAD contacts are provided by residues 291 to 293 (RKA), 301 to 302 (HQ), and 355 to 359 (MLFRC). Catalysis depends on glutamate 382, which acts as the Proton acceptor. A substrate-binding site is contributed by glycine 383. 384-386 (TSQ) contributes to the FAD binding site. Residue arginine 394 participates in substrate binding.

It belongs to the acyl-CoA dehydrogenase family. As to quaternary structure, homotetramer. It depends on FAD as a cofactor.

The protein resides in the mitochondrion matrix. The enzyme catalyses a medium-chain 2,3-saturated fatty acyl-CoA + oxidized [electron-transfer flavoprotein] + H(+) = a medium-chain (2E)-enoyl-CoA + reduced [electron-transfer flavoprotein]. It participates in lipid metabolism; mitochondrial fatty acid beta-oxidation. This enzyme is specific for acyl chain lengths of 4 to 16. In Caenorhabditis briggsae, this protein is Probable medium-chain specific acyl-CoA dehydrogenase 2, mitochondrial.